Reading from the N-terminus, the 79-residue chain is Dolichyl-diphosphooligosaccharide--protein glycosyltransferase subunit TMEM258 (79 aa).

M1 is modified (N-acetylmethionine). Residues M1–A16 are Lumenal-facing. Residues V17–F37 form a helical membrane-spanning segment. At V38–L54 the chain is on the cytoplasmic side. Residues L55 to V75 traverse the membrane as a helical segment. Residues G76–V79 lie on the Lumenal side of the membrane.

Belongs to the OST5 family. Component of the oligosaccharyltransferase (OST) complex. OST exists in two different complex forms which contain common core subunits RPN1, RPN2, OST48, OST4, DAD1 and TMEM258, either STT3A or STT3B as catalytic subunits, and form-specific accessory subunits. STT3A complex assembly occurs through the formation of 3 subcomplexes. Subcomplex 1 contains RPN1 and TMEM258, subcomplex 2 contains the STT3A-specific subunits STT3A, DC2/OSTC, and KCP2 as well as the core subunit OST4, and subcomplex 3 contains RPN2, DAD1, and OST48. The STT3A complex can form stable complexes with the Sec61 complex or with both the Sec61 and TRAP complexes.

The protein localises to the membrane. The protein resides in the endoplasmic reticulum. It localises to the cytoplasm. Its pathway is protein modification; protein glycosylation. Its function is as follows. Subunit of the oligosaccharyl transferase (OST) complex that catalyzes the initial transfer of a defined glycan (Glc(3)Man(9)GlcNAc(2) in eukaryotes) from the lipid carrier dolichol-pyrophosphate to an asparagine residue within an Asn-X-Ser/Thr consensus motif in nascent polypeptide chains, the first step in protein N-glycosylation. N-glycosylation occurs cotranslationally and the complex associates with the Sec61 complex at the channel-forming translocon complex that mediates protein translocation across the endoplasmic reticulum (ER). All subunits are required for a maximal enzyme activity. The polypeptide is Dolichyl-diphosphooligosaccharide--protein glycosyltransferase subunit TMEM258 (Canis lupus familiaris (Dog)).